Consider the following 396-residue polypeptide: NADH-quinone oxidoreductase subunit D 1 (396 aa).

It belongs to the complex I 49 kDa subunit family. As to quaternary structure, NDH-1 is composed of 14 different subunits. Subunits NuoB, C, D, E, F, and G constitute the peripheral sector of the complex.

It localises to the cell inner membrane. It carries out the reaction a quinone + NADH + 5 H(+)(in) = a quinol + NAD(+) + 4 H(+)(out). In terms of biological role, NDH-1 shuttles electrons from NADH, via FMN and iron-sulfur (Fe-S) centers, to quinones in the respiratory chain. The immediate electron acceptor for the enzyme in this species is believed to be ubiquinone. Couples the redox reaction to proton translocation (for every two electrons transferred, four hydrogen ions are translocated across the cytoplasmic membrane), and thus conserves the redox energy in a proton gradient. The protein is NADH-quinone oxidoreductase subunit D 1 of Beijerinckia indica subsp. indica (strain ATCC 9039 / DSM 1715 / NCIMB 8712).